Consider the following 620-residue polypeptide: Phosphopentomutase (620 aa).

Residues arginine 71 and serine 173 each contribute to the alpha-D-glucose 1,6-bisphosphate site. Serine 173 acts as the Phosphoserine intermediate in catalysis. 4 residues coordinate Mg(2+): serine 173, aspartate 330, aspartate 332, and aspartate 334. Phosphoserine is present on serine 173. Aspartate 334, arginine 335, threonine 408, glutamate 432, and lysine 446 together coordinate alpha-D-glucose 1,6-bisphosphate.

Belongs to the phosphohexose mutase family. In terms of assembly, monomer. Mg(2+) serves as cofactor. In terms of tissue distribution, highly expressed in lung, spleen and thymus. Expressed at lower levels in liver, brain, kidney, skeletal muscle, testis and heart.

It localises to the cytoplasm. The protein resides in the cytosol. The catalysed reaction is alpha-D-ribose 1-phosphate = D-ribose 5-phosphate. The enzyme catalyses 2-deoxy-alpha-D-ribose 1-phosphate = 2-deoxy-D-ribose 5-phosphate. It catalyses the reaction alpha-D-glucose 1-phosphate = alpha-D-glucose 6-phosphate. It carries out the reaction O-phospho-L-seryl-[protein] + alpha-D-glucose 1-phosphate = alpha-D-glucose 1,6-bisphosphate + L-seryl-[protein]. The catalysed reaction is alpha-D-glucose 1,6-bisphosphate + L-seryl-[protein] = O-phospho-L-seryl-[protein] + alpha-D-glucose 6-phosphate. Catalyzes the conversion of the nucleoside breakdown products ribose-1-phosphate and deoxyribose-1-phosphate to the corresponding 5-phosphopentoses. Catalyzes the reversible isomerization of alpha-D-glucose 1-phosphate to alpha-D-glucose 6-phosphate but with a lower catalytic efficiency. The mechanism proceeds via the intermediate compound alpha-D-glucose 1,6-bisphosphate. In vitro, also has a low glucose 1,6-bisphosphate synthase activity which is most probably not physiologically relevant. In Mus musculus (Mouse), this protein is Phosphopentomutase.